Reading from the N-terminus, the 671-residue chain is DNA ligase (671 aa).

Residues 38-42, 87-88, and E113 contribute to the NAD(+) site; these read DKEFD and SL. Catalysis depends on K115, which acts as the N6-AMP-lysine intermediate. Residues R136, E170, K282, and K306 each coordinate NAD(+). Residues C396, C399, C414, and C419 each contribute to the Zn(2+) site. Residues 586–671 enclose the BRCT domain; it reads SDLQPFVGQS…LLKQEGIAID (86 aa).

Belongs to the NAD-dependent DNA ligase family. LigA subfamily. It depends on Mg(2+) as a cofactor. Mn(2+) serves as cofactor.

It catalyses the reaction NAD(+) + (deoxyribonucleotide)n-3'-hydroxyl + 5'-phospho-(deoxyribonucleotide)m = (deoxyribonucleotide)n+m + AMP + beta-nicotinamide D-nucleotide.. Its function is as follows. DNA ligase that catalyzes the formation of phosphodiester linkages between 5'-phosphoryl and 3'-hydroxyl groups in double-stranded DNA using NAD as a coenzyme and as the energy source for the reaction. It is essential for DNA replication and repair of damaged DNA. The protein is DNA ligase of Leptospira biflexa serovar Patoc (strain Patoc 1 / Ames).